Here is a 352-residue protein sequence, read N- to C-terminus: Sphingosine 1-phosphate receptor 2 (352 aa).

Residues 1–34 (MGGLYSEYLNPEKVQEHYNYTKETLDMQETPSRK) are Extracellular-facing. An N-linked (GlcNAc...) asparagine glycan is attached at Asn-19. Residues 35–59 (VASAFIIILCCAIVVENLLVLIAVA) form a helical membrane-spanning segment. Over 60-66 (RNSKFHS) the chain is Cytoplasmic. Residues 67–95 (AMYLFLGNLAASDLLAGVAFVANTLLSGP) traverse the membrane as a helical segment. At 96 to 109 (VTLSLTPLQWFARE) the chain is on the extracellular side. A helical transmembrane segment spans residues 110 to 128 (GSAFITLSASVFSLLAIAI). Residues 129 to 147 (ERQVAIAKVKLYGSDKSCR) lie on the Cytoplasmic side of the membrane. A helical membrane pass occupies residues 148-173 (MLMLIGASWLISLILGGLPILGWNCL). Topologically, residues 174–189 (DHLEACSTVLPLYAKH) are extracellular. The chain crosses the membrane as a helical span at residues 190–210 (YVLCVVTIFSVILLAIVALYV). Over 211–233 (RIYFVVRSSHADVAGPQTLALLK) the chain is Cytoplasmic. The chain crosses the membrane as a helical span at residues 234–255 (TVTIVLGVFIICWLPAFSILLL). At 256-271 (DSTCPVRACPVLYKAH) the chain is on the extracellular side. A helical membrane pass occupies residues 272-292 (YFFAFATLNSLLNPVIYTWRS). Residues 293 to 352 (RDLRREVLRPLLCWRQGKGATGRRGGNPGHRLLPLRSSSSLERGLHMPTSPTFLEGNTVV) lie on the Cytoplasmic side of the membrane. The S-palmitoyl cysteine moiety is linked to residue Cys-305.

It belongs to the G-protein coupled receptor 1 family. Expressed in all developing tissues with highest levels detected in primitive, transformed cells. Relative abundance: lung &gt; kidney = skin = gut &gt; spleen &gt; brain &gt; liver.

The protein resides in the cell membrane. Receptor for the lysosphingolipid sphingosine 1-phosphate (S1P). S1P is a bioactive lysophospholipid that elicits diverse physiological effects on most types of cells and tissues. Receptor for the chemokine-like protein FAM19A5. Mediates the inhibitory effect of FAM19A5 on vascular smooth muscle cell proliferation and migration. In lymphoid follicles, couples the binding of S1P to the activation of GNA13 and downstream inhibition of AKT activation leading to suppression of germinal center (GC) B cell growth and migration outside the GC niche. The chain is Sphingosine 1-phosphate receptor 2 (S1pr2) from Rattus norvegicus (Rat).